A 1024-amino-acid polypeptide reads, in one-letter code: E3 ISG15--protein ligase HERC5 (1024 aa).

The segment covering 1–13 (MERRSRRKSRRNG) has biased composition (basic residues). The tract at residues 1-28 (MERRSRRKSRRNGRSTAGKAAATQPAKS) is disordered. RCC1 repeat units follow at residues 96–155 (NMKI…ALSK), 156–208 (GGEL…ALSM), 209–260 (SGNI…LLTQ), 262–312 (GLLF…AYVS), and 314–364 (LGKV…LIMI). Residues 702–1024 (ENEDLRKELW…EAINNNRGFG (323 aa)) form the HECT domain. The active-site Glycyl thioester intermediate is Cys994.

As to quaternary structure, (Microbial infection) Interacts with human cytomegalovirus protein UL26; this interaction inhibits global protein ISGylation. (Microbial infection) Interacts with Kaposi's sarcoma-associated herpesvirus protein v-IRF1; this interaction inhibits global protein ISGylation. In terms of assembly, binds to CCNA1, CCNB1, CCND1 and CCNE1. Interacts with UBE2L6. Interacts with IRF3, this interaction is marginal in resting cells but enhanced upon viral infection. Interacts with influenza A virus NS1. Post-translationally, ISGylated. As to expression, expressed in testis and to a lesser degree in brain, ovary and placenta. Found in most tissues at low levels.

Its subcellular location is the cytoplasm. The protein resides in the perinuclear region. Major E3 ligase for ISG15 conjugation. Acts as a positive regulator of innate antiviral response in cells induced by interferon. Functions as part of the ISGylation machinery that recognizes target proteins in a broad and relatively non-specific manner. Catalyzes ISGylation of IRF3 which results in sustained activation, it attenuates IRF3-PIN1 interaction, which antagonizes IRF3 ubiquitination and degradation, and boosts the antiviral response. Mediates ISGylation of the phosphatase PTEN leading to its degradation, thus alleviating its suppression of the PI3K-AKT signaling pathway and promoting the production of cytokines that facilitate bacterial clearance. Interferes with the function of key viral structural proteins such as ebolavirus structural protein VP40 or HIV-1 protein GAG. Catalyzes ISGylation of influenza A viral NS1 which attenuates virulence; ISGylated NS1 fails to form homodimers and thus to interact with its RNA targets. Catalyzes ISGylation of papillomavirus type 16 L1 protein which results in dominant-negative effect on virus infectivity. Physically associated with polyribosomes, broadly modifies newly synthesized proteins in a cotranslational manner. In an interferon-stimulated cell, newly translated viral proteins are primary targets of ISG15. Promotes parkin/PRKN ubiquitin E3 ligase activity by suppressing the intramolecular interaction that maintains its autoinhibited conformation. In terms of biological role, (Microbial infection) Functions as an E3 ligase for ISGylation of hepatitis B virus protein X leading to enhanced viral replication due to increased interferon resistance. This is E3 ISG15--protein ligase HERC5 (HERC5) from Homo sapiens (Human).